A 486-amino-acid chain; its full sequence is ATP synthase subunit beta (486 aa).

Position 167 to 174 (G167 to T174) interacts with ATP.

The protein belongs to the ATPase alpha/beta chains family. F-type ATPases have 2 components, CF(1) - the catalytic core - and CF(0) - the membrane proton channel. CF(1) has five subunits: alpha(3), beta(3), gamma(1), delta(1), epsilon(1). CF(0) has three main subunits: a(1), b(2) and c(9-12). The alpha and beta chains form an alternating ring which encloses part of the gamma chain. CF(1) is attached to CF(0) by a central stalk formed by the gamma and epsilon chains, while a peripheral stalk is formed by the delta and b chains.

The protein localises to the cell inner membrane. It carries out the reaction ATP + H2O + 4 H(+)(in) = ADP + phosphate + 5 H(+)(out). Produces ATP from ADP in the presence of a proton gradient across the membrane. The catalytic sites are hosted primarily by the beta subunits. This chain is ATP synthase subunit beta, found in Anaplasma marginale (strain St. Maries).